The sequence spans 505 residues: Probable glycine dehydrogenase (decarboxylating) subunit 2 (505 aa).

Residue Lys274 is modified to N6-(pyridoxal phosphate)lysine.

It belongs to the GcvP family. C-terminal subunit subfamily. As to quaternary structure, the glycine cleavage system is composed of four proteins: P, T, L and H. In this organism, the P 'protein' is a heterodimer of two subunits. Pyridoxal 5'-phosphate serves as cofactor.

The enzyme catalyses N(6)-[(R)-lipoyl]-L-lysyl-[glycine-cleavage complex H protein] + glycine + H(+) = N(6)-[(R)-S(8)-aminomethyldihydrolipoyl]-L-lysyl-[glycine-cleavage complex H protein] + CO2. The glycine cleavage system catalyzes the degradation of glycine. The P protein binds the alpha-amino group of glycine through its pyridoxal phosphate cofactor; CO(2) is released and the remaining methylamine moiety is then transferred to the lipoamide cofactor of the H protein. The protein is Probable glycine dehydrogenase (decarboxylating) subunit 2 of Sulfurisphaera tokodaii (strain DSM 16993 / JCM 10545 / NBRC 100140 / 7) (Sulfolobus tokodaii).